The sequence spans 316 residues: MYEWLNALPKAELHLHLEGTLEPELLFALAERNRIALPWNDVETLRKAYAFNNLQEFLDLYYAGADVLRTEQDFYDLTWAYLQKCKAQNVVHVEPFFDPQTHTDRGIPFEVVLAGIRAALRDGEKLLGIRHGLILSFLRHLSEEQAQKTLDQALPFRDAFIAVGLDSSEVGHPPSKFQRVFDRARSEGFLTVAHAGEEGPPEYIWEALDLLKVERIDHGVRAFEDERLMRRLIDEQIPLTVCPLSNTKLCVFDDMSQHTILDMLERGVKVTVNSDDPAYFGGYVTENFHALQQSLGMTEEQARRLAQNSLDARLVK.

Residues H14, H16, and H194 each contribute to the Zn(2+) site. E197 functions as the Proton donor in the catalytic mechanism. Zn(2+) is bound at residue D275. A substrate-binding site is contributed by D276.

Belongs to the metallo-dependent hydrolases superfamily. Adenosine and AMP deaminases family. Adenine deaminase type 2 subfamily. Zn(2+) serves as cofactor.

It catalyses the reaction adenine + H2O + H(+) = hypoxanthine + NH4(+). Catalyzes the hydrolytic deamination of adenine to hypoxanthine. Plays an important role in the purine salvage pathway and in nitrogen catabolism. The polypeptide is Adenine deaminase (Pseudomonas aeruginosa (strain LESB58)).